Here is a 449-residue protein sequence, read N- to C-terminus: TNF receptor-associated factor family protein DDB_G0272340 (449 aa).

Residues 33–76 (CPICEECIMDVNKCEALQCKEGHVHCRLCWMKSLESKKECMTCR) form an RING-type; degenerate zinc finger. 2 TRAF-type zinc fingers span residues 133-187 (GHIK…IDDS) and 189-251 (VHYS…SELS). Residues 263 to 309 (MEATIDQHICKFEKSEKEYKKLELEYNRLKDDFKILQSELKVIRELK) adopt a coiled-coil conformation. The MATH domain maps to 311–437 (NYQNKWVITN…QNSVTLNINI (127 aa)).

The protein belongs to the TNF receptor-associated factor family. A subfamily.

The protein resides in the cytoplasm. Functionally, probable adapter protein and signal transducer that links members of the tumor necrosis factor receptor family to different signaling pathways by association with the receptor cytoplasmic domain and kinases. The protein is TNF receptor-associated factor family protein DDB_G0272340 of Dictyostelium discoideum (Social amoeba).